Reading from the N-terminus, the 67-residue chain is UPF0434 protein Lcho_2556 (67 aa).

It belongs to the UPF0434 family.

The chain is UPF0434 protein Lcho_2556 from Leptothrix cholodnii (strain ATCC 51168 / LMG 8142 / SP-6) (Leptothrix discophora (strain SP-6)).